The chain runs to 785 residues: Phenylalanine--tRNA ligase beta subunit (785 aa).

The tRNA-binding domain occupies 39 to 147; it reads FPIPRGVVFA…DALPPGTPLA (109 aa). In terms of domain architecture, B5 spans 399 to 474; sequence KPPEAIPFRP…RIQGYETIPL (76 aa). Residues aspartate 452, aspartate 458, glutamate 461, and glutamate 462 each contribute to the Mg(2+) site. Residues 688–780 form the FDX-ACB domain; sequence SRHPAAFRDL…ALRARGFGLR (93 aa).

It belongs to the phenylalanyl-tRNA synthetase beta subunit family. Type 1 subfamily. As to quaternary structure, tetramer of two alpha and two beta subunits. Mg(2+) is required as a cofactor.

The protein resides in the cytoplasm. It catalyses the reaction tRNA(Phe) + L-phenylalanine + ATP = L-phenylalanyl-tRNA(Phe) + AMP + diphosphate + H(+). The protein is Phenylalanine--tRNA ligase beta subunit of Thermus thermophilus (strain ATCC BAA-163 / DSM 7039 / HB27).